The sequence spans 189 residues: UPF0301 protein A1C_00165 (189 aa).

This sequence belongs to the UPF0301 (AlgH) family.

The sequence is that of UPF0301 protein A1C_00165 from Rickettsia akari (strain Hartford).